We begin with the raw amino-acid sequence, 161 residues long: Urease accessory protein UreE (161 aa).

A disordered region spans residues 138–161 (RGAYHAHGGHSHDHGQGHHHHDHG).

It belongs to the UreE family.

The protein resides in the cytoplasm. Functionally, involved in urease metallocenter assembly. Binds nickel. Probably functions as a nickel donor during metallocenter assembly. The polypeptide is Urease accessory protein UreE (Agrobacterium fabrum (strain C58 / ATCC 33970) (Agrobacterium tumefaciens (strain C58))).